The sequence spans 257 residues: Type III pantothenate kinase (257 aa).

6 to 13 (DVGNTSTK) is an ATP binding site. 109–112 (GADR) provides a ligand contact to substrate. Asp-111 (proton acceptor) is an active-site residue. Asp-132 is a binding site for K(+). Thr-135 provides a ligand contact to ATP. Thr-187 is a binding site for substrate.

The protein belongs to the type III pantothenate kinase family. In terms of assembly, homodimer. The cofactor is NH4(+). K(+) serves as cofactor.

Its subcellular location is the cytoplasm. The catalysed reaction is (R)-pantothenate + ATP = (R)-4'-phosphopantothenate + ADP + H(+). Its pathway is cofactor biosynthesis; coenzyme A biosynthesis; CoA from (R)-pantothenate: step 1/5. Its function is as follows. Catalyzes the phosphorylation of pantothenate (Pan), the first step in CoA biosynthesis. This is Type III pantothenate kinase from Anaplasma marginale (strain St. Maries).